The primary structure comprises 71 residues: uncharacterized protein (71 aa).

Residues 12–34 (YLYNYFSSTTSWLVFIILSLDTI) traverse the membrane as a helical segment.

The protein resides in the membrane. This is an uncharacterized protein from Schizosaccharomyces pombe (strain 972 / ATCC 24843) (Fission yeast).